Consider the following 512-residue polypeptide: Maturase K (512 aa).

The protein belongs to the intron maturase 2 family. MatK subfamily.

The protein localises to the plastid. It is found in the chloroplast. Usually encoded in the trnK tRNA gene intron. Probably assists in splicing its own and other chloroplast group II introns. This Oenothera argillicola (Appalachian evening primrose) protein is Maturase K.